We begin with the raw amino-acid sequence, 412 residues long: Subtilisin-like protease 6 (412 aa).

Positions 1–20 (MGFITKAIPIVLAALSTVNG) are cleaved as a signal peptide. A propeptide spanning residues 21-127 (AKILEAGPHA…VRTSTNGTNL (107 aa)) is cleaved from the precursor. The Inhibitor I9 domain occupies 36 to 120 (KYIVVMKREV…YIEPDFVVRT (85 aa)). 2 N-linked (GlcNAc...) asparagine glycosylation sites follow: asparagine 123 and asparagine 126. The 278-residue stretch at 135–412 (SWGLARVSSK…SKLIYNGSGK (278 aa)) folds into the Peptidase S8 domain. Catalysis depends on charge relay system residues aspartate 167 and histidine 198. Residues asparagine 252 and asparagine 264 are each glycosylated (N-linked (GlcNAc...) asparagine). Serine 358 functions as the Charge relay system in the catalytic mechanism. The N-linked (GlcNAc...) asparagine glycan is linked to asparagine 408.

Belongs to the peptidase S8 family.

Its subcellular location is the secreted. Its function is as follows. Secreted subtilisin-like serine protease with keratinolytic activity that contributes to pathogenicity. The sequence is that of Subtilisin-like protease 6 (SUB6) from Trichophyton tonsurans (Scalp ringworm fungus).